The following is a 448-amino-acid chain: SET domain-containing protein SmydA-8, isoform B (448 aa).

An SET domain is found at proline 42–alanine 273.

The protein belongs to the class V-like SAM-binding methyltransferase superfamily.

The sequence is that of SET domain-containing protein SmydA-8, isoform B from Drosophila melanogaster (Fruit fly).